The chain runs to 321 residues: Eukaryotic translation initiation factor 3 subunit I (321 aa).

WD repeat units lie at residues 8–47 (GHER…RLGT), 50–89 (GHGG…TLSK), 140–179 (VDNS…KLIS), 182–221 (EHSK…HLKT), and 279–318 (GHFG…DDIE).

The protein belongs to the eIF-3 subunit I family. Component of the eukaryotic translation initiation factor 3 (eIF-3) complex.

It is found in the cytoplasm. In terms of biological role, component of the eukaryotic translation initiation factor 3 (eIF-3) complex, which is involved in protein synthesis of a specialized repertoire of mRNAs and, together with other initiation factors, stimulates binding of mRNA and methionyl-tRNAi to the 40S ribosome. The eIF-3 complex specifically targets and initiates translation of a subset of mRNAs involved in cell proliferation. The chain is Eukaryotic translation initiation factor 3 subunit I from Nematostella vectensis (Starlet sea anemone).